We begin with the raw amino-acid sequence, 216 residues long: ATP phosphoribosyltransferase (216 aa).

It belongs to the ATP phosphoribosyltransferase family. Short subfamily. Heteromultimer composed of HisG and HisZ subunits.

It localises to the cytoplasm. The catalysed reaction is 1-(5-phospho-beta-D-ribosyl)-ATP + diphosphate = 5-phospho-alpha-D-ribose 1-diphosphate + ATP. Its pathway is amino-acid biosynthesis; L-histidine biosynthesis; L-histidine from 5-phospho-alpha-D-ribose 1-diphosphate: step 1/9. Catalyzes the condensation of ATP and 5-phosphoribose 1-diphosphate to form N'-(5'-phosphoribosyl)-ATP (PR-ATP). Has a crucial role in the pathway because the rate of histidine biosynthesis seems to be controlled primarily by regulation of HisG enzymatic activity. This is ATP phosphoribosyltransferase from Nitrosomonas europaea (strain ATCC 19718 / CIP 103999 / KCTC 2705 / NBRC 14298).